The following is a 656-amino-acid chain: F-box/LRR-repeat protein 10 (656 aa).

The F-box domain maps to glutamate 20–asparagine 66. LRR repeat units lie at residues asparagine 71–cysteine 96, cysteine 120–serine 145, glycine 151–phenylalanine 176, serine 194–glycine 221, valine 243–aspartate 268, valine 277–arginine 301, phenylalanine 310–glycine 335, phenylalanine 336–histidine 361, glycine 362–arginine 387, cysteine 388–glycine 412, cysteine 413–glycine 437, aspartate 439–glycine 463, cysteine 464–asparagine 491, leucine 492–glutamate 517, cysteine 518–aspartate 551, and cysteine 552–glycine 578. The disordered stretch occupies residues isoleucine 632 to aspartate 656.

The chain is F-box/LRR-repeat protein 10 (FBL10) from Arabidopsis thaliana (Mouse-ear cress).